The following is a 302-amino-acid chain: Putative fructose-bisphosphate aldolase (302 aa).

Aspartate 86 (proton donor) is an active-site residue. Histidine 87, aspartate 116, glutamate 146, and histidine 192 together coordinate Zn(2+). Dihydroxyacetone phosphate is bound at residue glycine 193. Histidine 223 lines the Zn(2+) pocket. Residues 224–226 (GAD) and 245–248 (NVNR) contribute to the dihydroxyacetone phosphate site.

The protein belongs to the class II fructose-bisphosphate aldolase family. As to quaternary structure, homodimer. Requires Zn(2+) as cofactor.

It catalyses the reaction beta-D-fructose 1,6-bisphosphate = D-glyceraldehyde 3-phosphate + dihydroxyacetone phosphate. Its pathway is carbohydrate degradation; glycolysis; D-glyceraldehyde 3-phosphate and glycerone phosphate from D-glucose: step 4/4. Catalyzes the aldol condensation of dihydroxyacetone phosphate (DHAP or glycerone-phosphate) with glyceraldehyde 3-phosphate (G3P) to form fructose 1,6-bisphosphate (FBP) in gluconeogenesis and the reverse reaction in glycolysis. The chain is Putative fructose-bisphosphate aldolase from Coccidioides immitis (strain RS) (Valley fever fungus).